Here is a 156-residue protein sequence, read N- to C-terminus: ATP synthase subunit b (156 aa).

A helical membrane pass occupies residues 3 to 23 (INFTLLAQALAFAGLIWIIAT).

It belongs to the ATPase B chain family. In terms of assembly, F-type ATPases have 2 components, F(1) - the catalytic core - and F(0) - the membrane proton channel. F(1) has five subunits: alpha(3), beta(3), gamma(1), delta(1), epsilon(1). F(0) has three main subunits: a(1), b(2) and c(10-14). The alpha and beta chains form an alternating ring which encloses part of the gamma chain. F(1) is attached to F(0) by a central stalk formed by the gamma and epsilon chains, while a peripheral stalk is formed by the delta and b chains.

It is found in the cell membrane. Its function is as follows. F(1)F(0) ATP synthase produces ATP from ADP in the presence of a proton or sodium gradient. F-type ATPases consist of two structural domains, F(1) containing the extramembraneous catalytic core and F(0) containing the membrane proton channel, linked together by a central stalk and a peripheral stalk. During catalysis, ATP synthesis in the catalytic domain of F(1) is coupled via a rotary mechanism of the central stalk subunits to proton translocation. Component of the F(0) channel, it forms part of the peripheral stalk, linking F(1) to F(0). The polypeptide is ATP synthase subunit b (Stenotrophomonas maltophilia (strain K279a)).